The primary structure comprises 317 residues: Ribosomal RNA small subunit methyltransferase A (317 aa).

S-adenosyl-L-methionine is bound by residues Asn-37, Val-39, Gly-64, Glu-85, Asp-115, and Asn-134. Residues 293–317 are disordered; that stretch reads GGSDEATSTGRDARAPDISGHASAS.

Belongs to the class I-like SAM-binding methyltransferase superfamily. rRNA adenine N(6)-methyltransferase family. RsmA subfamily.

The protein localises to the cytoplasm. It carries out the reaction adenosine(1518)/adenosine(1519) in 16S rRNA + 4 S-adenosyl-L-methionine = N(6)-dimethyladenosine(1518)/N(6)-dimethyladenosine(1519) in 16S rRNA + 4 S-adenosyl-L-homocysteine + 4 H(+). Functionally, specifically dimethylates two adjacent adenosines (A1518 and A1519) in the loop of a conserved hairpin near the 3'-end of 16S rRNA in the 30S particle. May play a critical role in biogenesis of 30S subunits. The polypeptide is Ribosomal RNA small subunit methyltransferase A (Mycobacterium bovis (strain BCG / Tokyo 172 / ATCC 35737 / TMC 1019)).